The sequence spans 882 residues: Translation initiation factor IF-2 (882 aa).

Residues 28-296 are disordered; sequence GIRKSADDSV…LQQGFQKPAQ (269 aa). Polar residues predominate over residues 67–81; the sequence is STLNIPGTGGKSKSV. The segment covering 92–209 has biased composition (basic and acidic residues); the sequence is VKRDPQEAER…RMAEENKWTD (118 aa). Residues 244–258 are compositionally biased toward basic residues; the sequence is GRGRNAKAARPKKGN. Over residues 259–272 the composition is skewed to basic and acidic residues; the sequence is KHAESKADREEARA. The 170-residue stretch at 381 to 550 folds into the tr-type G domain; it reads PRAPVVTIMG…LLQAEVLELK (170 aa). Positions 390-397 are G1; sequence GHVDHGKT. Residue 390–397 participates in GTP binding; it reads GHVDHGKT. The tract at residues 415 to 419 is G2; that stretch reads GITQH. Residues 436–439 form a G3 region; sequence DTPG. GTP-binding positions include 436–440 and 490–493; these read DTPGH and NKID. The G4 stretch occupies residues 490–493; the sequence is NKID. The segment at 526–528 is G5; the sequence is SAK. Lys800 is modified (N6-acetyllysine).

It belongs to the TRAFAC class translation factor GTPase superfamily. Classic translation factor GTPase family. IF-2 subfamily.

Its subcellular location is the cytoplasm. Functionally, one of the essential components for the initiation of protein synthesis. Protects formylmethionyl-tRNA from spontaneous hydrolysis and promotes its binding to the 30S ribosomal subunits. Also involved in the hydrolysis of GTP during the formation of the 70S ribosomal complex. This Shigella boydii serotype 4 (strain Sb227) protein is Translation initiation factor IF-2.